A 236-amino-acid polypeptide reads, in one-letter code: Giant extracellular hemoglobin linker 2 chain (236 aa).

In terms of domain architecture, LDL-receptor class A spans 66-108 (NGCEPRHFQCGGSAMECISDLLTCDGSPDCANGADEDSDVCHI). Intrachain disulfides connect cysteine 68/cysteine 82, cysteine 75/cysteine 95, and cysteine 89/cysteine 106.

In terms of assembly, disulfide-linked dimer of identical chains. A model is proposed for the subunit structure of the Tylorrhynchus hemoglobin, consisting of 216 polypeptides chains, 192 heme-containing chains, and 24 linker chains.

Acts as a linker for the assembly of heme-containing chains in the construction of giant hemoglobin. In Tylorrhynchus heterochetus (Japanese palolo worm), this protein is Giant extracellular hemoglobin linker 2 chain.